Consider the following 100-residue polypeptide: Protein RnfH (100 aa).

The protein belongs to the UPF0125 (RnfH) family.

In Actinobacillus succinogenes (strain ATCC 55618 / DSM 22257 / CCUG 43843 / 130Z), this protein is Protein RnfH.